A 346-amino-acid polypeptide reads, in one-letter code: Annexin A1 (346 aa).

Ala-2 carries the N-acetylalanine modification. Ser-5 is modified (phosphoserine; by TRPM7). Gln-19 participates in a covalent cross-link: Isoglutamyl lysine isopeptide (Gln-Lys) (interchain with K-?). At Tyr-21 the chain carries Phosphotyrosine; by EGFR. At Ser-27 the chain carries Phosphoserine; by PKC. Ser-34 and Ser-37 each carry phosphoserine. Annexin repeat units follow at residues 42–113 (FNPS…AMLK), 114–185 (TPAQ…ALAK), 197–269 (DLAD…TIVK), and 273–344 (STPA…ALCG). Lys-58 is subject to N6-acetyllysine. Ca(2+) is bound by residues Gly-59, Val-60, Glu-62, Lys-97, Leu-100, Glu-105, Met-127, Gly-129, Gly-131, Thr-132, and Glu-134. Thr-136 is subject to Phosphothreonine. Asp-171, Gly-210, and Arg-213 together coordinate Ca(2+). Lys-214 participates in a covalent cross-link: Glycyl lysine isopeptide (Lys-Gly) (interchain with G-Cter in SUMO1); alternate. A Glycyl lysine isopeptide (Lys-Gly) (interchain with G-Cter in SUMO2); alternate cross-link involves residue Lys-214. 4 residues coordinate Ca(2+): Gly-215, Asp-253, Glu-255, and Leu-256. Lys-257 is covalently cross-linked (Glycyl lysine isopeptide (Lys-Gly) (interchain with G-Cter in SUMO1)). Ca(2+) is bound by residues Glu-261, Met-286, Gly-288, and Gly-290. N6-acetyllysine is present on Lys-312. The cysteines at positions 324 and 343 are disulfide-linked. Residues Leu-328, Glu-330, and Thr-331 each contribute to the Ca(2+) site. Lys-332 participates in a covalent cross-link: Glycyl lysine isopeptide (Lys-Gly) (interchain with G-Cter in SUMO1). Residue Glu-336 coordinates Ca(2+).

It belongs to the annexin family. In terms of assembly, homodimer; non-covalently linked. Homodimer; linked by transglutamylation. Homodimers linked by transglutamylation are observed in placenta, but not in other tissues. Interacts with S100A11. Heterotetramer, formed by two molecules each of S100A11 and ANXA1. Interacts with DYSF. Interacts with EGFR. Post-translationally, phosphorylated by protein kinase C, EGFR and TRPM7. Phosphorylated in response to EGF treatment. Sumoylated. In terms of processing, proteolytically cleaved by cathepsin CTSG to release the active N-terminal peptide Ac2-26. Detected in eosinophils. Detected in lung, placenta, spleen and thymus (at protein level).

It localises to the nucleus. It is found in the cytoplasm. The protein resides in the cell projection. Its subcellular location is the cilium. The protein localises to the basolateral cell membrane. It localises to the lateral cell membrane. It is found in the cell membrane. The protein resides in the apical cell membrane. Its subcellular location is the membrane. The protein localises to the endosome membrane. It localises to the secreted. It is found in the extracellular space. The protein resides in the early endosome. Its subcellular location is the cytoplasmic vesicle membrane. The protein localises to the extracellular exosome. It localises to the cytoplasmic vesicle. It is found in the secretory vesicle lumen. The protein resides in the phagocytic cup. Its function is as follows. Plays important roles in the innate immune response as effector of glucocorticoid-mediated responses and regulator of the inflammatory process. Has anti-inflammatory activity. Plays a role in glucocorticoid-mediated down-regulation of the early phase of the inflammatory response. Contributes to the adaptive immune response by enhancing signaling cascades that are triggered by T-cell activation, regulates differentiation and proliferation of activated T-cells. Promotes the differentiation of T-cells into Th1 cells and negatively regulates differentiation into Th2 cells. Has no effect on unstimulated T-cells. Negatively regulates hormone exocytosis via activation of the formyl peptide receptors and reorganization of the actin cytoskeleton. Has high affinity for Ca(2+) and can bind up to eight Ca(2+) ions. Displays Ca(2+)-dependent binding to phospholipid membranes. Plays a role in the formation of phagocytic cups and phagosomes. Plays a role in phagocytosis by mediating the Ca(2+)-dependent interaction between phagosomes and the actin cytoskeleton. Functionally, functions at least in part by activating the formyl peptide receptors and downstream signaling cascades. Promotes chemotaxis of granulocytes and monocytes via activation of the formyl peptide receptors. Promotes rearrangement of the actin cytoskeleton, cell polarization and cell migration. Promotes resolution of inflammation and wound healing. Acts via neutrophil N-formyl peptide receptors to enhance the release of CXCL2. The sequence is that of Annexin A1 (Anxa1) from Rattus norvegicus (Rat).